The following is a 258-amino-acid chain: uncharacterized protein (258 aa).

Transmembrane regions (helical) follow at residues Ile-24–Phe-44, Pro-70–Met-90, Leu-100–Ile-120, Val-130–Phe-150, Leu-157–Leu-177, and Phe-181–Ala-201. His-188 is an active-site residue.

Belongs to the peptidase S54 family.

It is found in the golgi apparatus membrane. This is an uncharacterized protein from Schizosaccharomyces pombe (strain 972 / ATCC 24843) (Fission yeast).